The primary structure comprises 73 residues: Conotoxin CnIIIF (73 aa).

The signal sequence occupies residues 1-19; it reads MSKLGVLLTICLLLFPLTA. A propeptide spanning residues 20-51 is cleaved from the precursor; that stretch reads LPMDGDQSVDRPAERMQDDISSGQHPLFNQKR. Cystine bridges form between Cys53–Cys72, Cys54–Cys70, and Cys60–Cys73.

Belongs to the conotoxin M superfamily. In terms of tissue distribution, expressed by the venom duct.

It localises to the secreted. In terms of biological role, shows a paralytic effect in fish. The protein is Conotoxin CnIIIF of Conus consors (Singed cone).